The primary structure comprises 151 residues: Large-conductance mechanosensitive channel (151 aa).

The next 2 membrane-spanning stretches (helical) occupy residues 12–32 (GNIV…ALVT) and 71–91 (VLLS…FLVV). Residues 125–151 (NSNSSGRHEAPGTAGTPPPNYGPRADT) form a disordered region.

The protein belongs to the MscL family. Homopentamer.

It localises to the cell membrane. Channel that opens in response to stretch forces in the membrane lipid bilayer. May participate in the regulation of osmotic pressure changes within the cell. The sequence is that of Large-conductance mechanosensitive channel from Mycobacterium ulcerans (strain Agy99).